We begin with the raw amino-acid sequence, 205 residues long: Dihydrofolate reductase (205 aa).

One can recognise a DHFR domain in the interval 1 to 201 (MLALVVALAS…TSFKMFLYTK (201 aa)). NADP(+) is bound by residues A7 and 13-19 (GIGNANA). Residue 29 to 34 (DMAWFR) participates in substrate binding. 62–64 (RRT) serves as a coordination point for NADP(+). Position 78 (R78) interacts with substrate. Residues 84–86 (SRG) and 118–125 (GGRDVYSL) contribute to the NADP(+) site.

It belongs to the dihydrofolate reductase family.

It carries out the reaction (6S)-5,6,7,8-tetrahydrofolate + NADP(+) = 7,8-dihydrofolate + NADPH + H(+). The protein operates within cofactor biosynthesis; tetrahydrofolate biosynthesis; 5,6,7,8-tetrahydrofolate from 7,8-dihydrofolate: step 1/1. Its function is as follows. Key enzyme in folate metabolism. Catalyzes an essential reaction for de novo glycine and purine synthesis, and for DNA precursor synthesis. This chain is Dihydrofolate reductase (DHFR-1), found in Encephalitozoon cuniculi (strain GB-M1) (Microsporidian parasite).